Consider the following 104-residue polypeptide: Large ribosomal subunit protein bL21 (104 aa).

This sequence belongs to the bacterial ribosomal protein bL21 family. In terms of assembly, part of the 50S ribosomal subunit. Contacts protein L20.

This protein binds to 23S rRNA in the presence of protein L20. The protein is Large ribosomal subunit protein bL21 of Streptococcus thermophilus (strain ATCC BAA-491 / LMD-9).